A 28-amino-acid chain; its full sequence is Humanin-like 2 (28 aa).

The protein belongs to the humanin family. As to expression, highly expressed in testis. Also expressed in kidney, heart, skeletal muscles and brain.

It localises to the secreted. The protein resides in the cytoplasm. Functionally, plays a role as a neuroprotective and antiapoptotic factor. The protein is Humanin-like 2 of Homo sapiens (Human).